Reading from the N-terminus, the 175-residue chain is Methylmalonyl-CoA epimerase, mitochondrial (175 aa).

The transit peptide at 1 to 35 directs the protein to the mitochondrion; the sequence is MARVLKVAAASAAGLFPRLRTPVSTVRTSASLSSH. Positions 46–175 constitute a VOC domain; that stretch reads RLNHVAVAVP…GGVLVELEQA (130 aa). Position 49 (His49) interacts with Co(2+). Lys113 carries the post-translational modification N6-succinyllysine. His121 contacts Co(2+). Lys149 bears the N6-acetyllysine; alternate mark. Lys149 is subject to N6-succinyllysine; alternate. Position 171 (Glu171) interacts with Co(2+).

The protein belongs to the methylmalonyl-CoA epimerase family.

It localises to the mitochondrion. The catalysed reaction is (R)-methylmalonyl-CoA = (S)-methylmalonyl-CoA. Its function is as follows. Methylmalonyl-CoA epimerase involved in propionyl-CoA metabolism. This Bos taurus (Bovine) protein is Methylmalonyl-CoA epimerase, mitochondrial (MCEE).